A 120-amino-acid chain; its full sequence is MKVSEAALSLLVLILIITSASRSQPKVPEWVNTPSTCCLKYYEKVLPRRLVVGYRKALNCHLPAIIFVTKRNREVCTNPNDDWVQEYIKDPNLPLLPTRNLSTVKIITAKNGQPQLLNSQ.

Positions 1–23 are cleaved as a signal peptide; the sequence is MKVSEAALSLLVLILIITSASRS. Intrachain disulfides connect C37/C60 and C38/C76.

It belongs to the intercrine beta (chemokine CC) family. In terms of tissue distribution, mainly expressed in liver, also found in spleen and thymus. Highly expressed in LPS- and IFN-gamma-activated monocytes, weakly in some lymphocytes, including natural killer cells, gamma-delta T-cells, and some T-cell clones.

Its subcellular location is the secreted. Functionally, shows chemotactic activity for lymphocytes and monocytes but not neutrophils. Also shows potent myelosuppressive activity, suppresses proliferation of myeloid progenitor cells. Recombinant SCYA16 shows chemotactic activity for monocytes and THP-1 monocytes, but not for resting lymphocytes and neutrophils. Induces a calcium flux in THP-1 cells that were desensitized by prior expression to RANTES. This chain is C-C motif chemokine 16 (CCL16), found in Homo sapiens (Human).